Here is a 744-residue protein sequence, read N- to C-terminus: Cell division cycle protein 27 homolog B (744 aa).

Residues 101–134 form a TPR 1 repeat; the sequence is AAGHYLLGLIYKYTDRRKNAAQQFKQSLTIDPLL. Residues 180–199 are compositionally biased toward polar residues; sequence NEERNSTSTKNTSSEDYSPR. 2 disordered regions span residues 180–218 and 359–390; these read NEER…NFHS and ENMD…NDQE. Over residues 363 to 374 the composition is skewed to basic and acidic residues; sequence EGVRGEPFDDSR. The segment covering 375-387 has biased composition (polar residues); sequence PNTASTTGSMASN. TPR repeat units lie at residues 450–483, 518–551, 553–585, 587–619, 621–653, 655–687, and 688–721; these read GWVL…SPYC, PQSW…NPRF, YAHT…DTRH, NAWY…NPSS, VIMS…DRKN, LPMY…APSE, and SSVY…KPPA.

The protein belongs to the APC3/CDC27 family. The APC/C is composed of at least 10 subunits. Can homodimerize. Interacts with APC2, APC10, FZR2 and FZR3. Interacts with PANS1. Interacts with SAMBA. As to expression, specifically expressed in dividing and elongating cells.

The protein resides in the nucleus. The protein operates within protein modification; protein ubiquitination. Component of the anaphase promoting complex/cyclosome (APC/C), a cell cycle-regulated E3 ubiquitin-protein ligase complex that controls progression through mitosis and the G1 phase of the cell cycle. The APC/C complex controls several key steps in the cell cycle by mediating ubiquitination and subsequent degradation of target proteins such as cyclins. The APC/C complex is required for the female gametophyte development and is involved in several aspect of development by controlling cell division and cell elongation. Involved in the control of endoreduplication. Functionally redundant with CDC27A in the control of gametophyte development. In Arabidopsis thaliana (Mouse-ear cress), this protein is Cell division cycle protein 27 homolog B (CDC27B).